A 215-amino-acid polypeptide reads, in one-letter code: Large ribosomal subunit protein uL3 (215 aa).

The tract at residues 136-155 (GVSISHRSHGSTGQRQDPGK) is disordered. Residue Gln151 is modified to N5-methylglutamine.

The protein belongs to the universal ribosomal protein uL3 family. Part of the 50S ribosomal subunit. Forms a cluster with proteins L14 and L19. Methylated by PrmB.

In terms of biological role, one of the primary rRNA binding proteins, it binds directly near the 3'-end of the 23S rRNA, where it nucleates assembly of the 50S subunit. This Rickettsia felis (strain ATCC VR-1525 / URRWXCal2) (Rickettsia azadi) protein is Large ribosomal subunit protein uL3.